Reading from the N-terminus, the 868-residue chain is uncharacterized protein (868 aa).

The protein localises to the cytoplasm. Its subcellular location is the nucleus. This is an uncharacterized protein from Schizosaccharomyces pombe (strain 972 / ATCC 24843) (Fission yeast).